Here is a 130-residue protein sequence, read N- to C-terminus: MSQDSESFIRQLFKAFTDFSTDVESLRGFLTPDYRQLVDGRELTLDDFISHAKALRTHLHRLDINVQQIVCQGNKAATVHIAHAIRSSGESSRIKVIAFYSFKDGRISLIDELTYVLEGGNADRELGSVQ.

This is an uncharacterized protein from Schizosaccharomyces pombe (strain 972 / ATCC 24843) (Fission yeast).